A 247-amino-acid polypeptide reads, in one-letter code: MRFLLSNDDGYFAPGIEALAAGLATLGTVTVVAPERDRSGASNSLTLDRPLMLRRAPNGFHFVNGTPTDCVHLAVTGMLDQQPDMVISGINHGANMGDDTVYSGTVAAATEGFLLGVPSLAVSLAAKPGEHLDTAVQVTLDIVRRMMDRPFTEPTLLNINVPDRPFHELRGTVATRLGRRHHAEPVVKSVNPRGDVVYWVGAAGPAQDAGEGTDFHAVREGFVSVTPLSIDLTGYRQLAELPAWLNP.

The a divalent metal cation site is built by D8, D9, S39, and N91.

It belongs to the SurE nucleotidase family. Requires a divalent metal cation as cofactor.

Its subcellular location is the cytoplasm. It carries out the reaction a ribonucleoside 5'-phosphate + H2O = a ribonucleoside + phosphate. In terms of biological role, nucleotidase that shows phosphatase activity on nucleoside 5'-monophosphates. The sequence is that of 5'-nucleotidase SurE from Laribacter hongkongensis (strain HLHK9).